A 404-amino-acid polypeptide reads, in one-letter code: Zinc finger protein zfs1 (404 aa).

The segment covering 134-149 (SYLHSGSSPHGNTSNH) has biased composition (polar residues). Disordered stretches follow at residues 134-168 (SYLH…TGSG) and 259-322 (SNAS…APNG). Positions 150-168 (PSPISSLESLPSRSSTGSG) are enriched in low complexity. Positions 259 to 283 (SNASIRNAPSNLSKQFSPSGNSPLT) are enriched in polar residues. A compositionally biased stretch (low complexity) spans 304-317 (GSASHPHGSGSSNG). 2 C3H1-type zinc fingers span residues 326–354 (LYKT…HGNQ) and 364–392 (KYKS…HDES).

In terms of assembly, interacts with moc3.

The protein localises to the cytoplasm. It is found in the nucleus. Its function is as follows. Binds to specific AU-rich elements (ARE) in the 3'-untranslated region of target mRNAs and promotes their degradation. Binds to ARE present in the arz1 mRNA and stimulates the rate of arz1 mRNA decay. Required for coordination of septum formation with exit from mitosis. Involved in the mating response pathway. Induces sexual development and ascus formation. The polypeptide is Zinc finger protein zfs1 (zfs1) (Schizosaccharomyces pombe (strain 972 / ATCC 24843) (Fission yeast)).